Reading from the N-terminus, the 49-residue chain is Large ribosomal subunit protein eL40 (49 aa).

Belongs to the eukaryotic ribosomal protein eL40 family.

The sequence is that of Large ribosomal subunit protein eL40 from Halorubrum lacusprofundi (strain ATCC 49239 / DSM 5036 / JCM 8891 / ACAM 34).